The primary structure comprises 346 residues: Inositol 2-dehydrogenase (346 aa).

This sequence belongs to the Gfo/Idh/MocA family. In terms of assembly, homotetramer.

The catalysed reaction is myo-inositol + NAD(+) = scyllo-inosose + NADH + H(+). Its function is as follows. Involved in the oxidation of myo-inositol (MI) to 2-keto-myo-inositol (2KMI or 2-inosose). The chain is Inositol 2-dehydrogenase from Rhodococcus erythropolis (strain PR4 / NBRC 100887).